The chain runs to 93 residues: Large ribosomal subunit protein uL23 (93 aa).

The protein belongs to the universal ribosomal protein uL23 family. In terms of assembly, part of the 50S ribosomal subunit. Contacts protein L29, and trigger factor when it is bound to the ribosome.

Its function is as follows. One of the early assembly proteins it binds 23S rRNA. One of the proteins that surrounds the polypeptide exit tunnel on the outside of the ribosome. Forms the main docking site for trigger factor binding to the ribosome. This is Large ribosomal subunit protein uL23 from Campylobacter fetus subsp. fetus (strain 82-40).